The following is a 569-amino-acid chain: Acetate/butyrate--CoA ligase AAE7, peroxisomal (569 aa).

A Microbody targeting signal motif is present at residues serine 567–leucine 569.

The protein belongs to the ATP-dependent AMP-binding enzyme family. Expressed in roots, leaves, stems, flowers and developing seeds.

The protein localises to the peroxisome. The enzyme catalyses acetate + ATP + CoA = acetyl-CoA + AMP + diphosphate. It catalyses the reaction a medium-chain fatty acid + ATP + CoA = a medium-chain fatty acyl-CoA + AMP + diphosphate. Functionally, peroxisomal acetate/butyrate--CoA ligase that is probably involved in the activation of exogenous acetate for entry into the glyoxylate cycle. May play a role to prevent carbon loss from peroxisomes during lipid mobilization. In vitro, is active with both acetate and butyrate. This is Acetate/butyrate--CoA ligase AAE7, peroxisomal (AAE7) from Arabidopsis thaliana (Mouse-ear cress).